The chain runs to 479 residues: Putative F-box protein At1g67390 (479 aa).

The F-box domain maps to 40–88 (DDRISKLPDDVLVMILASLSTEDALKTSVLSTRWKNVWKQVPYLHFDLL).

This chain is Putative F-box protein At1g67390, found in Arabidopsis thaliana (Mouse-ear cress).